A 536-amino-acid polypeptide reads, in one-letter code: Prickle planar cell polarity protein 3-B (536 aa).

Residues 66-175 (SGSQRDSLCD…CVRPISGTMS (110 aa)) enclose the PET domain. LIM zinc-binding domains are found at residues 177–241 (TVCQ…ELKR), 242–302 (PRCL…LYAQ), and 305–366 (DSCG…HTKS). Residues 418–536 (PTQAAPARSL…KKKDKSCFLS (119 aa)) are disordered. Basic and acidic residues predominate over residues 438 to 448 (FSRECPNRRSL). The segment covering 450–467 (DLSSHTRTPTRVTFQLPS) has biased composition (polar residues). Over residues 474-487 (SISFSRPSFTSSSS) the composition is skewed to low complexity.

This sequence belongs to the prickle / espinas / testin family. In terms of assembly, interacts with vangl2 via its C-terminus. The vangl2-dependent membrane recruitment of prickle3 is a prerequisite for its polarization. Interacts with wtip. Wtip is involved in the recruitment of prickle3 to the basal body.

It is found in the cytoplasm. The protein resides in the cell membrane. Its subcellular location is the mitochondrion. In terms of biological role, involved in the planar cell polarity (PCP) pathway that is essential for the polarization of epithelial cells during morphogenetic processes, including gastrulation and neurulation. PCP is maintained by two molecular modules, the global and the core modules. Proteins of the core module include the proteins Frizzled (Fz), Disheveled (Dsh), Van Gogh (Vang), Prickle (Pk), Flamingo (Fmi, Celsr) and Diego (Dgo). The core module proteins develop subcellular asymmetry, accumulating in two groups on opposite sides of epithelial cells. Distinct proximal (Vang, Pk and Fmi) and distal (Fz, Dsh, Dgo and Fmi) complexes segregate to opposite sides of the cell, where they interact with the opposite complex in the neighboring cell at or near the adherents junctions. Directional information to orient polarization with respect to the tissue axes is provided by the global module which involves Wnt proteins. Involved in the organization of the basal body. Involved in cilia growth and positioning. Required for proper assembly, stability, and function of mitochondrial membrane ATP synthase (mitochondrial complex V). The sequence is that of Prickle planar cell polarity protein 3-B (prickle3-b) from Xenopus laevis (African clawed frog).